Consider the following 201-residue polypeptide: LexA repressor (201 aa).

A DNA-binding region (H-T-H motif) is located at residues 28-48 (LREIAAQLGISGTLGVMKHLE). Active-site for autocatalytic cleavage activity residues include serine 120 and lysine 157.

This sequence belongs to the peptidase S24 family. Homodimer.

The catalysed reaction is Hydrolysis of Ala-|-Gly bond in repressor LexA.. In terms of biological role, represses a number of genes involved in the response to DNA damage (SOS response), including recA and lexA. In the presence of single-stranded DNA, RecA interacts with LexA causing an autocatalytic cleavage which disrupts the DNA-binding part of LexA, leading to derepression of the SOS regulon and eventually DNA repair. This chain is LexA repressor, found in Citrifermentans bemidjiense (strain ATCC BAA-1014 / DSM 16622 / JCM 12645 / Bem) (Geobacter bemidjiensis).